Here is a 292-residue protein sequence, read N- to C-terminus: Diaminopimelate epimerase (292 aa).

3 residues coordinate substrate: asparagine 13, glutamine 46, and asparagine 66. Cysteine 75 functions as the Proton donor in the catalytic mechanism. Substrate-binding positions include glycine 76–asparagine 77, asparagine 170, asparagine 203, and glutamate 221–arginine 222. Cysteine 230 serves as the catalytic Proton acceptor. Glycine 231 to threonine 232 lines the substrate pocket.

It belongs to the diaminopimelate epimerase family. In terms of assembly, homodimer.

Its subcellular location is the cytoplasm. It catalyses the reaction (2S,6S)-2,6-diaminopimelate = meso-2,6-diaminopimelate. It functions in the pathway amino-acid biosynthesis; L-lysine biosynthesis via DAP pathway; DL-2,6-diaminopimelate from LL-2,6-diaminopimelate: step 1/1. In terms of biological role, catalyzes the stereoinversion of LL-2,6-diaminopimelate (L,L-DAP) to meso-diaminopimelate (meso-DAP), a precursor of L-lysine and an essential component of the bacterial peptidoglycan. This is Diaminopimelate epimerase from Acidovorax ebreus (strain TPSY) (Diaphorobacter sp. (strain TPSY)).